We begin with the raw amino-acid sequence, 682 residues long: Protein SYG1 homolog (682 aa).

Residues 1-219 enclose the SPX domain; it reads MKFGKVIEGQ…HTDLQGFWVD (219 aa). Over 1–274 the chain is Cytoplasmic; it reads MKFGKVIEGQ…KEHFSANSMR (274 aa). The chain crosses the membrane as a helical span at residues 275-295; sequence FGLLFGAGLPLAIEAACYYNA. At 296-300 the chain is on the extracellular side; the sequence is TEQSS. Residues 301 to 321 form a helical membrane-spanning segment; the sequence is YLLQIWGGFFLVIFAFVLFDL. Residues 322 to 348 are Cytoplasmic-facing; that stretch reads DCYVWEKTRVNYMLIFEFNQRKSLNWR. The helical transmembrane segment at 349–369 threads the bilayer; that stretch reads QHLEIVGAVFFIFSLFFFLCM. The Extracellular portion of the chain corresponds to 370–377; the sequence is RNFFPGFT. Residues 378–398 traverse the membrane as a helical segment; sequence IYFPALFLGVVGTFLIAPVIV. The Cytoplasmic segment spans residues 399-406; the sequence is PYWRMRRY. Residues 407–424 form a helical membrane-spanning segment; it reads LIIQLIRVFLSGLSTVHF. The Extracellular segment spans residues 425–426; the sequence is QD. Residues 427–447 traverse the membrane as a helical segment; that stretch reads FFFADQMVSLTYACGNISLFF. The Cytoplasmic portion of the chain corresponds to 448-525; sequence CLYKRLWRQP…WRIHPGLKYR (78 aa). Residues 459–654 enclose the EXS domain; it reads LCNSSHSPLL…VKPHSDVFVS (196 aa). The helical transmembrane segment at 526–546 threads the bilayer; sequence VLYTIFAGVNSLFSYTWDILM. The Extracellular segment spans residues 547–571; the sequence is DWNLLVRKDGRWQFREHRILKQLWP. A helical membrane pass occupies residues 572–592; the sequence is YIIAMILNFIVRSSFIFYCIF. The Cytoplasmic portion of the chain corresponds to 593–682; that stretch reads PNHIQHSSGI…QTDVDEAQFS (90 aa). Residues 659 to 682 are disordered; it reads SDKNYTDDEDSMDDQTDVDEAQFS. A compositionally biased stretch (acidic residues) spans 665 to 682; sequence DDEDSMDDQTDVDEAQFS.

This sequence belongs to the SYG1 (TC 2.A.94) family.

The protein localises to the cell membrane. May function in G-protein coupled signal transduction. The sequence is that of Protein SYG1 homolog from Schizosaccharomyces pombe (strain 972 / ATCC 24843) (Fission yeast).